The primary structure comprises 247 residues: UPF0612 protein P20C8.01c (247 aa).

Coiled coils occupy residues 27–63 (IKRY…MKYE) and 138–225 (DTVQ…DARS).

The protein belongs to the UPF0612 family.

It localises to the cytoplasm. The chain is UPF0612 protein P20C8.01c from Schizosaccharomyces pombe (strain 972 / ATCC 24843) (Fission yeast).